The sequence spans 199 residues: MTITVESLKRPEGSKPRALRRSGLIPANLYGHKGTESISLTIEAKTVERLLKRVSVNNTLIELNIADAPWRGKALLRELQIHPAKGTPYHLSFFAVAGHGDTTVEVRLRFVGTAVGVKQEGGVLDTVITELQVSCAPENIPDVIEIDVTNLQIGDSLSISDIPFPEGVTPLAELERLVVSVLPPQISADDAGTETETAS.

It belongs to the bacterial ribosomal protein bL25 family. CTC subfamily. As to quaternary structure, part of the 50S ribosomal subunit; part of the 5S rRNA/L5/L18/L25 subcomplex. Contacts the 5S rRNA. Binds to the 5S rRNA independently of L5 and L18.

In terms of biological role, this is one of the proteins that binds to the 5S RNA in the ribosome where it forms part of the central protuberance. The chain is Large ribosomal subunit protein bL25 from Nostoc punctiforme (strain ATCC 29133 / PCC 73102).